The primary structure comprises 224 residues: 7-cyano-7-deazaguanine synthase (224 aa).

10–20 contributes to the ATP binding site; that stretch reads VSGGLDSATVL. The Zn(2+) site is built by Cys189, Cys199, Cys202, and Cys205.

Belongs to the QueC family. Zn(2+) is required as a cofactor.

It carries out the reaction 7-carboxy-7-deazaguanine + NH4(+) + ATP = 7-cyano-7-deazaguanine + ADP + phosphate + H2O + H(+). The protein operates within purine metabolism; 7-cyano-7-deazaguanine biosynthesis. Catalyzes the ATP-dependent conversion of 7-carboxy-7-deazaguanine (CDG) to 7-cyano-7-deazaguanine (preQ(0)). The protein is 7-cyano-7-deazaguanine synthase of Nitrosococcus oceani (strain ATCC 19707 / BCRC 17464 / JCM 30415 / NCIMB 11848 / C-107).